The primary structure comprises 338 residues: Nicotinate-nucleotide--dimethylbenzimidazole phosphoribosyltransferase (338 aa).

The active-site Proton acceptor is E306.

It belongs to the CobT family.

It carries out the reaction 5,6-dimethylbenzimidazole + nicotinate beta-D-ribonucleotide = alpha-ribazole 5'-phosphate + nicotinate + H(+). It functions in the pathway nucleoside biosynthesis; alpha-ribazole biosynthesis; alpha-ribazole from 5,6-dimethylbenzimidazole: step 1/2. Catalyzes the synthesis of alpha-ribazole-5'-phosphate from nicotinate mononucleotide (NAMN) and 5,6-dimethylbenzimidazole (DMB). This chain is Nicotinate-nucleotide--dimethylbenzimidazole phosphoribosyltransferase, found in Cereibacter sphaeroides (strain ATCC 17025 / ATH 2.4.3) (Rhodobacter sphaeroides).